A 311-amino-acid chain; its full sequence is Taste receptor type 2 member 9 (311 aa).

Over 1–9 (MPSTIEAIY) the chain is Extracellular. Residues 10-32 (IILIAGELTIGIWGNGFIVLVNC) form a helical membrane-spanning segment. Residues 33–52 (IDWLKRRDVSLIDIILISLA) lie on the Cytoplasmic side of the membrane. A helical transmembrane segment spans residues 53 to 72 (ISRICLLCVISLDGFFILLF). Over 73–86 (PGTYDTNVLESIMD) the chain is Extracellular. The helical transmembrane segment at 87–109 (AVWTFANNSSLWFTSCLSIFYLL) threads the bilayer. Topologically, residues 110–128 (KIANISHPFFFWLKLKINK) are cytoplasmic. Residues 129 to 146 (VILAILLGSFLISLIISF) traverse the membrane as a helical segment. Residues 147 to 179 (PINGMWYNLFKVSHEENITWAFKVSTIPGAFKQ) are Extracellular-facing. N-linked (GlcNAc...) asparagine glycosylation occurs at Asn-163. The chain crosses the membrane as a helical span at residues 180–202 (LTLNLGAMVPFILCLISFFLLLF). Over 203-233 (SLVRHTKQIQLHATGFRDPSTEAHMRAVKAV) the chain is Cytoplasmic. Residues 234–256 (IIFLLLLILYYPVFLVMTSSTLI) form a helical membrane-spanning segment. At 257–260 (PQGK) the chain is on the extracellular side. A helical transmembrane segment spans residues 261-283 (LVLMIGDIVTVIFPSSHSFILIM). Residues 284–311 (GNSKLRAAFLKMLRFVKGFLRRRKPFVP) lie on the Cytoplasmic side of the membrane.

Belongs to the G-protein coupled receptor T2R family.

The protein localises to the membrane. In terms of biological role, gustducin-coupled receptor implicated in the perception of bitter compounds in the oral cavity and the gastrointestinal tract. Signals through PLCB2 and the calcium-regulated cation channel TRPM5. This is Taste receptor type 2 member 9 (TAS2R9) from Macaca mulatta (Rhesus macaque).